Consider the following 241-residue polypeptide: Venom nerve growth factor 2 (241 aa).

Positions 1–18 (MSMLCYTLITAFLIGIWA) are cleaved as a signal peptide. A propeptide spanning residues 19–125 (APKSEDNVPL…SLNRNIRAKR (107 aa)) is cleaved from the precursor. The interval 47–67 (GLKTSRNTDQRHPAPQKAEDQ) is disordered. Disulfide bonds link C139–C203, C181–C231, and C191–C233.

It belongs to the NGF-beta family. As to quaternary structure, homodimer; non-covalently linked. In terms of tissue distribution, expressed by the venom gland.

It is found in the secreted. Functionally, nerve growth factor is important for the development and maintenance of the sympathetic and sensory nervous systems. It stimulates division and differentiation of sympathetic and embryonic sensory neurons as well as basal forebrain cholinergic neurons in the brain. Its relevance in the snake venom is not clear. However, it has been shown to inhibit metalloproteinase-dependent proteolysis of platelet glycoprotein Ib alpha, suggesting a metalloproteinase inhibition to prevent metalloprotease autodigestion and/or protection against prey proteases. Binds a lipid between the two protein chains in the homodimer. The lipid-bound form promotes histamine relase from mouse mast cells, contrary to the lipid-free form. This Naja sputatrix (Malayan spitting cobra) protein is Venom nerve growth factor 2.